A 310-amino-acid chain; its full sequence is Manganese ABC transporter substrate-binding lipoprotein scaA (310 aa).

A signal peptide spans 1-19 (MKKCRFLVLLLLAFVGLAA). A lipid anchor (N-palmitoyl cysteine) is attached at Cys20. The S-diacylglycerol cysteine moiety is linked to residue Cys20. Residues His68, His140, Glu206, and Asp281 each contribute to the Mn(2+) site.

This sequence belongs to the bacterial solute-binding protein 9 family. Lipoprotein receptor antigen (Lrai) subfamily. The complex is composed of two ATP-binding proteins (ScaC), two transmembrane proteins (ScaB) and a solute-binding protein (ScaA).

It localises to the cell membrane. Part of ATP-binding cassette (ABC) transport system ScaABC involved in manganese import. Essential for growth under Mn(2+)-limiting conditions. Also acts as an adhesin which is involved on adherence to extracellular matrix. It is an important factor in pathogenesis and infection. The polypeptide is Manganese ABC transporter substrate-binding lipoprotein scaA (Streptococcus gordonii).